Reading from the N-terminus, the 505-residue chain is Probable cytochrome P450 28c1 (505 aa).

C444 contacts heme.

The protein belongs to the cytochrome P450 family. It depends on heme as a cofactor.

The protein resides in the endoplasmic reticulum membrane. Its subcellular location is the microsome membrane. Its function is as follows. May be involved in the metabolism of insect hormones and in the breakdown of synthetic insecticides. This Drosophila melanogaster (Fruit fly) protein is Probable cytochrome P450 28c1 (Cyp28c1).